The following is a 129-amino-acid chain: Small ribosomal subunit protein uS8 (129 aa).

This sequence belongs to the universal ribosomal protein uS8 family. In terms of assembly, part of the 30S ribosomal subunit.

Its function is as follows. One of the primary rRNA binding proteins, it binds directly to 16S rRNA central domain where it helps coordinate assembly of the platform of the 30S subunit. This is Small ribosomal subunit protein uS8 from Thermoplasma acidophilum (strain ATCC 25905 / DSM 1728 / JCM 9062 / NBRC 15155 / AMRC-C165).